The following is a 1935-amino-acid chain: Myosin-7 (1935 aa).

Residues aspartate 32–proline 81 form the Myosin N-terminal SH3-like domain. The Myosin motor domain maps to aspartate 85–aspartate 778. Lysine 129 is subject to N6,N6,N6-trimethyllysine. ATP is bound at residue glycine 178 to threonine 185. Threonine 378 bears the Phosphothreonine mark. Actin-binding stretches follow at residues leucine 655 to glutamate 677 and lysine 757 to glycine 771. Positions leucine 781–serine 810 constitute an IQ domain. Residues leucine 839–glutamate 1935 adopt a coiled-coil conformation. Residues serine 1137 and serine 1269 each carry the phosphoserine modification. Threonine 1282 bears the Phosphothreonine mark. A Phosphotyrosine modification is found at tyrosine 1308. Threonine 1309 is modified (phosphothreonine). A Phosphoserine modification is found at serine 1510. A Phosphothreonine modification is found at threonine 1513. Residues glutamate 1907 to glutamate 1935 are disordered. The segment covering lysine 1923–glutamate 1935 has biased composition (basic and acidic residues).

It belongs to the TRAFAC class myosin-kinesin ATPase superfamily. Myosin family. In terms of assembly, muscle myosin is a hexameric protein that consists of 2 heavy chain subunits (MHC), 2 alkali light chain subunits (MLC) and 2 regulatory light chain subunits (MLC-2). Interacts with ECPAS. Interacts (via C-terminus) with LRRC39. As to expression, both wild type and variant Gln-403 are detected in skeletal muscle (at protein level).

It localises to the cytoplasm. Its subcellular location is the myofibril. The protein resides in the sarcomere. Myosins are actin-based motor molecules with ATPase activity essential for muscle contraction. Forms regular bipolar thick filaments that, together with actin thin filaments, constitute the fundamental contractile unit of skeletal and cardiac muscle. This Homo sapiens (Human) protein is Myosin-7 (MYH7).